A 412-amino-acid polypeptide reads, in one-letter code: MEMRGKITKINENGLGVLGNILVPFAYPGDEVEVTETRERFGKIIARDFKLMTPSPLRIPGKCSHFGKCGGCLWQGLRYREQLKLKEEIFKRITGIEAEIKGSPRIWYFRNISNFIITVNGIGFKEFGMPKTVVNIRECPIFSERTPKYLKALKDFLRESNLKPWNWREGDVHYLQVREGKFTGEVMVNIIAHVPLNYREALMEAFNFADSIYWSLKADKKDDPRGFPTLVLGNEVIREKVEGITYLIHPSVFFQTNSYALPLLLKSVEKFCEGSKVLDLYSGIGTLSLYLAKRGFEVTGVEVNGTSVEMAKRSAEINSINATFIQGKAEDAELEGYETLIVDPPRKGLKEFSRRIVKKGPNTLIYVSCNPLRFILDYRNYLSEAYKVDDALLIDMFPHTPHIEAVIKLVRR.

Residues Cys-63, Cys-69, Cys-72, and Cys-139 each coordinate [4Fe-4S] cluster. Residues Gln-255, Tyr-281, Glu-302, and Asp-343 each coordinate S-adenosyl-L-methionine. The active-site Nucleophile is Cys-369.

The protein belongs to the class I-like SAM-binding methyltransferase superfamily. RNA M5U methyltransferase family.

The catalysed reaction is uridine(747) in 23S rRNA + S-adenosyl-L-methionine = 5-methyluridine(747) in 23S rRNA + S-adenosyl-L-homocysteine + H(+). Functionally, catalyzes the formation of 5-methyl-uridine at position equivalent to 747 (m5U747) in 23S rRNA. The polypeptide is 23S rRNA (uracil(747)-C(5))-methyltransferase (Pyrococcus horikoshii (strain ATCC 700860 / DSM 12428 / JCM 9974 / NBRC 100139 / OT-3)).